A 927-amino-acid polypeptide reads, in one-letter code: MSKKRLHEIAKEIGKTSKEVVEQAQSLGLPVKSHASSVEENDATRIVESFSSSKTKAPTNSVQTNQGVKTESKTVETKQGLSDDKPSTQPVAKPKPQSRNFKAEREARAKAEAEKRQHNGDHRKNNRHNDTRSDDRRHQGQKRSNGNRNDNRQGQQNNRNKNDGRYADHKQKPQTRPQQPAGNRIDFKARAAALKAEQNAEYSRHSEQRFREEQEAKRQAAKEQELAKAAALKAQEEAQKAKEKLASKPVAKVKEIVNKVAATPSQTADSRRKKQTRSDKSRQFSNENEDGQKQTKNKKNWNNQNQVRNQRNSNWNHNKKNKKGKTNGAPKPVTERKFHELPKEFEYTEGMTVAEIAKRIKREPAEIVKKLFMMGVMATQNQSLDGDTIELLMVDYGIEAHAKVEVDEADIERFFADEDYLNPDNLTERPPVVTIMGHVDHGKTTLLDTLRNSRVATGEAGGITQHIGAYQIEEAGKKITFLDTPGHAAFTSMRARGASVTDITILIVAADDGVMPQTVEAINHSKAAGVPIIVAINKIDKPGANPERVISELAEHGVISTAWGGESEFVEISAKFGKNIQELLETVLLVAEMEELKADADVRAIGTVIEARLDKGKGAVATLLVQQGTLNVQDPIVVGNTFGRVRAMTNDLGRRVKVAGPSTPVSITGLNEAPMAGDHFAVYADEKAARAAGEERAKRALLKQRQNTQRVSLENLFDTLKAGEVKSVNVIIKADVQGSVEALAASLLKIDVEGVKVNVVHSAVGAINESDVTLAEASNAVIIGFNVRPTPQARQQADADDVEIRQHSIIYKVIEEVEEAMKGKLDPEYQEKILGEAIIRETFKVSKVGTIGGFMVINGKVTRDSSVRVIRDGVVIFDGKLASLKHYKDDVKEVGNAQEGGLMIENYNDLKEDDTIEAYIMEEIKRK.

Positions 27-338 are disordered; that stretch reads LGLPVKSHAS…APKPVTERKF (312 aa). Positions 49 to 69 are enriched in polar residues; it reads SFSSSKTKAPTNSVQTNQGVK. Basic and acidic residues-rich tracts occupy residues 70 to 86 and 101 to 138; these read TESK…DDKP and FKAE…DRRH. Residues 146 to 159 are compositionally biased toward low complexity; sequence GNRNDNRQGQQNNR. 3 stretches are compositionally biased toward basic and acidic residues: residues 160–171, 202–226, and 234–257; these read NKNDGRYADHKQ, YSRH…EQEL, and AQEE…KEIV. The segment covering 300–316 has biased composition (low complexity); the sequence is NWNNQNQVRNQRNSNWN. Positions 428-597 constitute a tr-type G domain; sequence ERPPVVTIMG…LLVAEMEELK (170 aa). A G1 region spans residues 437–444; the sequence is GHVDHGKT. 437–444 provides a ligand contact to GTP; the sequence is GHVDHGKT. A G2 region spans residues 462–466; that stretch reads GITQH. The interval 483 to 486 is G3; it reads DTPG. Residues 483–487 and 537–540 contribute to the GTP site; these read DTPGH and NKID. A G4 region spans residues 537-540; it reads NKID. Positions 573-575 are G5; it reads SAK.

Belongs to the TRAFAC class translation factor GTPase superfamily. Classic translation factor GTPase family. IF-2 subfamily.

It localises to the cytoplasm. One of the essential components for the initiation of protein synthesis. Protects formylmethionyl-tRNA from spontaneous hydrolysis and promotes its binding to the 30S ribosomal subunits. Also involved in the hydrolysis of GTP during the formation of the 70S ribosomal complex. In Streptococcus agalactiae serotype Ia (strain ATCC 27591 / A909 / CDC SS700), this protein is Translation initiation factor IF-2.